The primary structure comprises 291 residues: Probable 2-(5''-triphosphoribosyl)-3'-dephosphocoenzyme-A synthase (291 aa).

Belongs to the CitG/MdcB family.

It carries out the reaction 3'-dephospho-CoA + ATP = 2'-(5''-triphospho-alpha-D-ribosyl)-3'-dephospho-CoA + adenine. In terms of biological role, involved in the formation of 2-(5''-phosphoribosyl)-3'-dephosphocoenzyme-A, the prosthetic group of the acyl-carrier protein of the malonate decarboxylase. In Pseudomonas fluorescens (strain ATCC BAA-477 / NRRL B-23932 / Pf-5), this protein is Probable 2-(5''-triphosphoribosyl)-3'-dephosphocoenzyme-A synthase.